Reading from the N-terminus, the 317-residue chain is Probable cell division protein WhiA (317 aa).

The H-T-H motif DNA-binding region spans 275 to 308; that stretch reads SLKELGEMLVPKVGKSGVNHRMRKIDELAEKLEE.

The protein belongs to the WhiA family.

Involved in cell division and chromosome segregation. The protein is Probable cell division protein WhiA of Desulfitobacterium hafniense (strain DSM 10664 / DCB-2).